The primary structure comprises 429 residues: Argininosuccinate lyase (429 aa).

This sequence belongs to the lyase 1 family. Argininosuccinate lyase subfamily.

Its subcellular location is the cytoplasm. The catalysed reaction is 2-(N(omega)-L-arginino)succinate = fumarate + L-arginine. It participates in amino-acid biosynthesis; L-arginine biosynthesis; L-arginine from L-ornithine and carbamoyl phosphate: step 3/3. In Pyrobaculum calidifontis (strain DSM 21063 / JCM 11548 / VA1), this protein is Argininosuccinate lyase.